The primary structure comprises 381 residues: ATP-dependent (S)-NAD(P)H-hydrate dehydratase (381 aa).

The region spanning 84–376 (AEAVVRRITP…EFLGKSLEDI (293 aa)) is the YjeF C-terminal domain. Residues Gly197 and 250-256 (NVYEYKR) contribute to the (6S)-NADPHX site. Residues 290–294 (KGKAD) and 309–318 (GSPRRCGGQG) each bind ATP. Asp319 contacts (6S)-NADPHX.

This sequence belongs to the NnrD/CARKD family. It depends on Mg(2+) as a cofactor.

The enzyme catalyses (6S)-NADHX + ATP = ADP + phosphate + NADH + H(+). It catalyses the reaction (6S)-NADPHX + ATP = ADP + phosphate + NADPH + H(+). Its function is as follows. Catalyzes the dehydration of the S-form of NAD(P)HX at the expense of ATP, which is converted to ADP. Together with NAD(P)HX epimerase, which catalyzes the epimerization of the S- and R-forms, the enzyme allows the repair of both epimers of NAD(P)HX, a damaged form of NAD(P)H that is a result of enzymatic or heat-dependent hydration. This chain is ATP-dependent (S)-NAD(P)H-hydrate dehydratase, found in Sorghum bicolor (Sorghum).